Here is a 106-residue protein sequence, read N- to C-terminus: Large ribosomal subunit protein bL21 (106 aa).

The protein belongs to the bacterial ribosomal protein bL21 family. In terms of assembly, part of the 50S ribosomal subunit. Contacts protein L20.

In terms of biological role, this protein binds to 23S rRNA in the presence of protein L20. This Streptomyces coelicolor (strain ATCC BAA-471 / A3(2) / M145) protein is Large ribosomal subunit protein bL21.